The primary structure comprises 884 residues: MHGEHDRGGVIIKVCDDVLALAGKHERAINLTKLDNTLEQHTPMMRQYLGIKAQYPDMLVFYRMGDFYELFHDDAEKASRLLGITLTKRGSSNGEPIRMAGVPYHAAEQYLAKLAKLGEAVAICEQVGDPAKSKGPVERQVTRILTPGTLTDAALLDDTRDNLLLAIAHGEGVLGLARINLASGRFILSEITPGLLAQELERISPAEILYPDDFYHMALEQVKCPKKRLAPWQFDLDSSIQTLTKQFSTYDLDGFGCAHMLAAIMAAGALLDYVKHTQRTSLPHIQSLMVEQGSQFIQLDAATRRNLEIDQTLRGESSPTLYSLLNTTVTAMGARLLRSWLHHPLQHQADIQARLQAVKVLQAQYDGLRPLLRNVGDIERMAARVALKTARPRDLSGLRDSLQQLPALQRVLRPEDSALLHSLQQQLDVPQAALDMLIAAIKDEPAAVLREGGVIADGFDAELDELRAIQSNCGEFLLQFEAQERERSGISNLKVEYNSVHGFYIEISRAQSENVPAEYRRRQTLKNVERYITPELKTFEDKVLSANERALAREKFLFDELLGNLQPALAAWQRNAEAVAQLDVLATFAERADVLKYVAPQFSSEAGLDIVDGRHPVVEQLAQPFIANSVSLSPYRQLLLITGPNMGGKSTYMRQTALIVLLAHCGCFVPAKSARIGPIDRIFTRIGASDDLAGGRSTFMVEMTETANILHNATERSLVLLDEIGRGTSTFDGLSLAWAVARQLLEKNRSYTLFATHYFELTRISEEFKHAANVHLDAVEHGDGIVFLHNVEEGPASQSYGLQVAQLAGIPRTVVNAAKRKLVQLEQSQVMQQSLAGQGDMFVAANVEPEPATHPVVSELESIDPDSLTPRQALDVLYKLKKLI.

Residue 643–650 (GPNMGGKS) coordinates ATP.

The protein belongs to the DNA mismatch repair MutS family.

In terms of biological role, this protein is involved in the repair of mismatches in DNA. It is possible that it carries out the mismatch recognition step. This protein has a weak ATPase activity. The protein is DNA mismatch repair protein MutS of Methylobacillus flagellatus (strain ATCC 51484 / DSM 6875 / VKM B-1610 / KT).